The sequence spans 131 residues: SPbeta prophage-derived uncharacterized protein YosD (131 aa).

The segment at 102 to 131 is disordered; it reads EHNNKKAKNNDTQNQRQIKTSWWQRLTKKD. The segment covering 111–125 has biased composition (polar residues); the sequence is NDTQNQRQIKTSWWQ.

The polypeptide is SPbeta prophage-derived uncharacterized protein YosD (yosD) (Bacillus subtilis (strain 168)).